The primary structure comprises 424 residues: Tyrosine--tRNA ligase (424 aa).

Position 37 (Tyr-37) interacts with L-tyrosine. A 'HIGH' region motif is present at residues 42–51 (PTADSLHLGH). Residues Tyr-175 and Gln-179 each contribute to the L-tyrosine site. The 'KMSKS' region motif lies at 235–239 (KFGKT). Lys-238 contributes to the ATP binding site. The S4 RNA-binding domain occupies 357–414 (ADLQQALVNAELVPSRGQARTMISSNAVAINGEKQSDPEYAFTDADRLFGRYTLLRRG).

It belongs to the class-I aminoacyl-tRNA synthetase family. TyrS type 1 subfamily. As to quaternary structure, homodimer.

The protein localises to the cytoplasm. It catalyses the reaction tRNA(Tyr) + L-tyrosine + ATP = L-tyrosyl-tRNA(Tyr) + AMP + diphosphate + H(+). Catalyzes the attachment of tyrosine to tRNA(Tyr) in a two-step reaction: tyrosine is first activated by ATP to form Tyr-AMP and then transferred to the acceptor end of tRNA(Tyr). The sequence is that of Tyrosine--tRNA ligase from Yersinia enterocolitica serotype O:8 / biotype 1B (strain NCTC 13174 / 8081).